A 137-amino-acid polypeptide reads, in one-letter code: Proofreading thioesterase EntH (137 aa).

The active-site Nucleophile or proton acceptor is glutamate 63.

The protein belongs to the thioesterase PaaI family. As to quaternary structure, homotetramer. Dimer of dimers. Interacts specifically with the aryl carrier protein (ArCP) domain of EntB.

It is found in the cytoplasm. Its pathway is siderophore biosynthesis; enterobactin biosynthesis. In terms of biological role, required for optimal enterobactin synthesis. Acts as a proofreading enzyme that prevents EntB misacylation by hydrolyzing the thioester bound existing between EntB and wrongly charged molecules. This Salmonella paratyphi B (strain ATCC BAA-1250 / SPB7) protein is Proofreading thioesterase EntH.